Consider the following 494-residue polypeptide: UPF0371 protein str1377 (494 aa).

It belongs to the UPF0371 family.

The polypeptide is UPF0371 protein str1377 (Streptococcus thermophilus (strain CNRZ 1066)).